The primary structure comprises 291 residues: Phosphate import ATP-binding protein PstB (291 aa).

Residues 1 to 21 are disordered; it reads MANKQIIDKNDDLQAHTDRND. Positions 45-286 constitute an ABC transporter domain; the sequence is YSTKNLDLWY…PSDKQTEDYI (242 aa). 77–84 provides a ligand contact to ATP; it reads GPSGCGKS.

This sequence belongs to the ABC transporter superfamily. Phosphate importer (TC 3.A.1.7) family. As to quaternary structure, the complex is composed of two ATP-binding proteins (PstB), two transmembrane proteins (PstC and PstA) and a solute-binding protein (PstS).

The protein localises to the cell membrane. It catalyses the reaction phosphate(out) + ATP + H2O = ADP + 2 phosphate(in) + H(+). Its function is as follows. Part of the ABC transporter complex PstSACB involved in phosphate import. Responsible for energy coupling to the transport system. The sequence is that of Phosphate import ATP-binding protein PstB from Staphylococcus saprophyticus subsp. saprophyticus (strain ATCC 15305 / DSM 20229 / NCIMB 8711 / NCTC 7292 / S-41).